Consider the following 342-residue polypeptide: Phenylalanine--tRNA ligase alpha subunit (342 aa).

Glu-255 contacts Mg(2+).

This sequence belongs to the class-II aminoacyl-tRNA synthetase family. Phe-tRNA synthetase alpha subunit type 1 subfamily. Tetramer of two alpha and two beta subunits. Requires Mg(2+) as cofactor.

It localises to the cytoplasm. The enzyme catalyses tRNA(Phe) + L-phenylalanine + ATP = L-phenylalanyl-tRNA(Phe) + AMP + diphosphate + H(+). This is Phenylalanine--tRNA ligase alpha subunit from Pelodictyon phaeoclathratiforme (strain DSM 5477 / BU-1).